Reading from the N-terminus, the 473-residue chain is Fumarate hydratase class II (473 aa).

Residues 105–107, 130–133, 140–142, and Thr-188 each bind substrate; these read SGT, HPND, and SSN. His-189 acts as the Proton donor/acceptor in catalysis. Ser-319 is an active-site residue. Substrate is bound by residues Ser-320 and 325 to 327; that span reads KVN.

Belongs to the class-II fumarase/aspartase family. Fumarase subfamily. In terms of assembly, homotetramer.

The protein localises to the cytoplasm. It carries out the reaction (S)-malate = fumarate + H2O. It participates in carbohydrate metabolism; tricarboxylic acid cycle; (S)-malate from fumarate: step 1/1. In terms of biological role, involved in the TCA cycle. Catalyzes the stereospecific interconversion of fumarate to L-malate. The protein is Fumarate hydratase class II of Xylella fastidiosa (strain 9a5c).